Consider the following 418-residue polypeptide: Histidine--tRNA ligase (418 aa).

Belongs to the class-II aminoacyl-tRNA synthetase family.

It localises to the cytoplasm. It catalyses the reaction tRNA(His) + L-histidine + ATP = L-histidyl-tRNA(His) + AMP + diphosphate + H(+). This chain is Histidine--tRNA ligase, found in Methanococcus aeolicus (strain ATCC BAA-1280 / DSM 17508 / OCM 812 / Nankai-3).